The following is a 92-amino-acid chain: Small ribosomal subunit protein uS19c (92 aa).

It belongs to the universal ribosomal protein uS19 family.

Its subcellular location is the plastid. The protein localises to the chloroplast. In terms of biological role, protein S19 forms a complex with S13 that binds strongly to the 16S ribosomal RNA. In Guillardia theta (Cryptophyte), this protein is Small ribosomal subunit protein uS19c (rps19).